A 206-amino-acid polypeptide reads, in one-letter code: Thymidylate kinase (206 aa).

An ATP-binding site is contributed by 11-18 (GPEGAGKT).

It belongs to the thymidylate kinase family.

It catalyses the reaction dTMP + ATP = dTDP + ADP. Phosphorylation of dTMP to form dTDP in both de novo and salvage pathways of dTTP synthesis. In Deinococcus radiodurans (strain ATCC 13939 / DSM 20539 / JCM 16871 / CCUG 27074 / LMG 4051 / NBRC 15346 / NCIMB 9279 / VKM B-1422 / R1), this protein is Thymidylate kinase (tmk).